A 171-amino-acid chain; its full sequence is UPF0303 protein YPN_2129 (171 aa).

This sequence belongs to the UPF0303 family.

This is UPF0303 protein YPN_2129 from Yersinia pestis bv. Antiqua (strain Nepal516).